The chain runs to 773 residues: Mitogen-activated protein kinase kinase kinase 9 (773 aa).

Over residues 1-14 (MKKSSDKSPVRQHD) the composition is skewed to basic and acidic residues. The segment at 1–35 (MKKSSDKSPVRQHDTATQINSDAVSSSTSFTDSDS) is disordered. Residues 21–35 (SDAVSSSTSFTDSDS) are compositionally biased toward low complexity. Phosphoserine occurs at positions 79 and 150. The tract at residues 100–493 (FDKILALMKK…VSNTSPICVS (394 aa)) is regulatory region. The residue at position 365 (serine 365) is a Phosphoserine; by MAPK4. The interval 426–455 (EIVRRPSSSSSSENGCDEEEAEDDKVEKEE) is disordered. Residues 440 to 449 (GCDEEEAEDD) are compositionally biased toward acidic residues. The Protein kinase domain occupies 501 to 755 (WQKGQLLRQG…ATELLNHPFV (255 aa)). ATP is bound by residues 507 to 515 (LRQGSFGSV) and lysine 529. The active-site Proton acceptor is aspartate 624. At serine 768 the chain carries Phosphoserine.

Belongs to the protein kinase superfamily. STE Ser/Thr protein kinase family. MAP kinase kinase kinase subfamily. Interacts with MPK4. In terms of processing, phosphorylated by MPK4 upon treatment with flg22. As to expression, expressed at least in rosette leaves (at protein level).

The catalysed reaction is L-seryl-[protein] + ATP = O-phospho-L-seryl-[protein] + ADP + H(+). It carries out the reaction L-threonyl-[protein] + ATP = O-phospho-L-threonyl-[protein] + ADP + H(+). Its function is as follows. Triggers SUMM2-mediated immune responses, including cell death and defense responses. Probably inhibited by the MEKK1-MKK1/ MKK2-MPK4 kinase cascade to adjust plant defense. Seems to contribute in transducing external glutamate (L-Glu) signal that elicits large-scale changes in root architecture. The protein is Mitogen-activated protein kinase kinase kinase 9 of Arabidopsis thaliana (Mouse-ear cress).